The sequence spans 285 residues: Putative quercetin 2,3-dioxygenase PA3240 (285 aa).

Positions 60, 62, 104, and 106 each coordinate a divalent metal cation.

The protein belongs to the pirin family. A divalent metal cation serves as cofactor.

The catalysed reaction is quercetin + O2 = 2-(3,4-dihydroxybenzoyloxy)-4,6-dihydroxybenzoate + CO. Its pathway is flavonoid metabolism; quercetin degradation. Putative quercetin 2,3-dioxygenase. This is Putative quercetin 2,3-dioxygenase PA3240 from Pseudomonas aeruginosa (strain ATCC 15692 / DSM 22644 / CIP 104116 / JCM 14847 / LMG 12228 / 1C / PRS 101 / PAO1).